Reading from the N-terminus, the 148-residue chain is Low molecular weight protein-tyrosine-phosphatase Etp (148 aa).

Catalysis depends on C13, which acts as the Nucleophile. The active site involves R19. Residue D119 is the Proton donor of the active site.

The protein belongs to the low molecular weight phosphotyrosine protein phosphatase family.

It carries out the reaction O-phospho-L-tyrosyl-[protein] + H2O = L-tyrosyl-[protein] + phosphate. In terms of biological role, dephosphorylates etk. This is Low molecular weight protein-tyrosine-phosphatase Etp (etp) from Escherichia coli O157:H7.